The sequence spans 424 residues: Deoxyguanosinetriphosphate triphosphohydrolase-like protein (424 aa).

Positions 1–10 (MEGTAPPTPY) are enriched in pro residues. A disordered region spans residues 1-31 (MEGTAPPTPYDPASVARYAPEPDKRPGRTAF). Over residues 20–31 (PEPDKRPGRTAF) the composition is skewed to basic and acidic residues. The HD domain occupies 70-220 (RLTHSLECAQ…MDWADDVAYS (151 aa)).

The protein belongs to the dGTPase family. Type 2 subfamily.

This is Deoxyguanosinetriphosphate triphosphohydrolase-like protein from Streptomyces coelicolor (strain ATCC BAA-471 / A3(2) / M145).